Reading from the N-terminus, the 285-residue chain is MAATKLDGKLYRDEIFADLEQRVAALKEKGVTPGLATVLVGDDPASHSYVRMKHKDCEQIGVNSIRKDLPADVSQEELNAVIDELNADDACTGYIVQLPLPKHLDENAVLERIDPDKDADGLHPVNLGKLVLNEPAPLPCTPNGAIHLLRRFDVELNGAKVVVIGRGVTVGRPIGLMLTRRSENSTVTLCHTGTKDLAAETKAADVIVAAAGVPHMITADMVKPGAAILDVGVSRGEDGKLKGDVHPDVWDVAGAVSPNPGGVGPLTRAFLVRNVVERAEKLLRA.

Residues glycine 165 to glycine 167, threonine 192, and valine 233 each bind NADP(+).

It belongs to the tetrahydrofolate dehydrogenase/cyclohydrolase family. As to quaternary structure, homodimer.

It carries out the reaction (6R)-5,10-methylene-5,6,7,8-tetrahydrofolate + NADP(+) = (6R)-5,10-methenyltetrahydrofolate + NADPH. The catalysed reaction is (6R)-5,10-methenyltetrahydrofolate + H2O = (6R)-10-formyltetrahydrofolate + H(+). It participates in one-carbon metabolism; tetrahydrofolate interconversion. Functionally, catalyzes the oxidation of 5,10-methylenetetrahydrofolate to 5,10-methenyltetrahydrofolate and then the hydrolysis of 5,10-methenyltetrahydrofolate to 10-formyltetrahydrofolate. The polypeptide is Bifunctional protein FolD (Corynebacterium jeikeium (strain K411)).